The primary structure comprises 283 residues: Thymidylate synthase (283 aa).

A dUMP-binding site is contributed by Arg33. His63 serves as a coordination point for (6R)-5,10-methylene-5,6,7,8-tetrahydrofolate. 138–139 (RR) serves as a coordination point for dUMP. Residue Cys158 is the Nucleophile of the active site. Residues 185–188 (RSAD), Asn196, and 226–228 (HIY) each bind dUMP. Asp188 lines the (6R)-5,10-methylene-5,6,7,8-tetrahydrofolate pocket. Ala282 serves as a coordination point for (6R)-5,10-methylene-5,6,7,8-tetrahydrofolate.

It belongs to the thymidylate synthase family. Bacterial-type ThyA subfamily. In terms of assembly, homodimer.

It localises to the cytoplasm. The catalysed reaction is dUMP + (6R)-5,10-methylene-5,6,7,8-tetrahydrofolate = 7,8-dihydrofolate + dTMP. The protein operates within pyrimidine metabolism; dTTP biosynthesis. Catalyzes the reductive methylation of 2'-deoxyuridine-5'-monophosphate (dUMP) to 2'-deoxythymidine-5'-monophosphate (dTMP) while utilizing 5,10-methylenetetrahydrofolate (mTHF) as the methyl donor and reductant in the reaction, yielding dihydrofolate (DHF) as a by-product. This enzymatic reaction provides an intracellular de novo source of dTMP, an essential precursor for DNA biosynthesis. The chain is Thymidylate synthase from Methylibium petroleiphilum (strain ATCC BAA-1232 / LMG 22953 / PM1).